We begin with the raw amino-acid sequence, 177 residues long: MSRVAKAPVSIPAGVEVKLDGQLLTVKGKNGELSRTIHNAVEVKQDNNELTFSPREGIVGADAQAGTARALVNAMVIGVTEGFTKKLQLVGVGYRAQIKGNAVALSLGFSHPVEHALPAGITAECPSQTEIVLKGADKQLIGQVAADIRAYRRPEPYKGKGVRYADEVVRIKEAKKK.

The protein belongs to the universal ribosomal protein uL6 family. Part of the 50S ribosomal subunit.

Functionally, this protein binds to the 23S rRNA, and is important in its secondary structure. It is located near the subunit interface in the base of the L7/L12 stalk, and near the tRNA binding site of the peptidyltransferase center. The sequence is that of Large ribosomal subunit protein uL6 from Pasteurella multocida (strain Pm70).